A 467-amino-acid chain; its full sequence is Glycogen synthase (467 aa).

Residue lysine 16 participates in ADP-alpha-D-glucose binding.

Belongs to the glycosyltransferase 1 family. Bacterial/plant glycogen synthase subfamily.

It carries out the reaction [(1-&gt;4)-alpha-D-glucosyl](n) + ADP-alpha-D-glucose = [(1-&gt;4)-alpha-D-glucosyl](n+1) + ADP + H(+). It functions in the pathway glycan biosynthesis; glycogen biosynthesis. In terms of biological role, synthesizes alpha-1,4-glucan chains using ADP-glucose. This is Glycogen synthase from Paracoccus denitrificans (strain Pd 1222).